The primary structure comprises 321 residues: Chitinase-like protein 1 (321 aa).

The signal sequence occupies residues 1–26; the sequence is MVTIRSGSIVILVLLAVSFLALVANG. Cysteines 42 and 55 form a disulfide. N-linked (GlcNAc...) asparagine glycosylation occurs at Asn57. Cys157 and Cys167 are joined by a disulfide. Residues Asn208 and Asn244 are each glycosylated (N-linked (GlcNAc...) asparagine). Cys267 and Cys304 are joined by a disulfide. The disordered stretch occupies residues 297 to 321; the sequence is GPNDELSCAEQKPFNPSTVPSSSSS. Residues 310–321 are compositionally biased toward polar residues; the sequence is FNPSTVPSSSSS.

This sequence belongs to the glycosyl hydrolase 19 family. As to expression, mostly expressed in seedlings shoots and roots, stems, and flowers, and, to a lower extent, in flowers, mature leaves and roots.

It localises to the secreted. No chitinase activity. Essential for normal plant growth and development. Regulates cell expansion extent and differentiation at least in roots and hypocotyls. Prevents lignin accumulation in the pith. May modulate ethylene-mediated regulation during development. Probably required to establish thermotolerance acclimation. Plays a role for controlled anisotropic cell expansion in the regulation of waving during root gravitropism and thigmotropism. Involved in the root system architecture adaptation to multiple environmental conditions such as nitrate. Contributes to salt tolerance and possibly to drought by preventing the overaccumulation of sodium ions. The sequence is that of Chitinase-like protein 1 (CTL1) from Arabidopsis thaliana (Mouse-ear cress).